A 514-amino-acid polypeptide reads, in one-letter code: 2,3-bisphosphoglycerate-independent phosphoglycerate mutase (514 aa).

Mn(2+)-binding residues include Asp-14 and Ser-64. Residue Ser-64 is the Phosphoserine intermediate of the active site. Substrate-binding positions include His-125, 155–156 (RD), Arg-187, Arg-193, 263–266 (RADR), and Lys-336. The Mn(2+) site is built by Asp-403, His-407, Asp-444, His-445, and His-463.

It belongs to the BPG-independent phosphoglycerate mutase family. As to quaternary structure, monomer. It depends on Mn(2+) as a cofactor.

The enzyme catalyses (2R)-2-phosphoglycerate = (2R)-3-phosphoglycerate. Its pathway is carbohydrate degradation; glycolysis; pyruvate from D-glyceraldehyde 3-phosphate: step 3/5. Its function is as follows. Catalyzes the interconversion of 2-phosphoglycerate and 3-phosphoglycerate. This Shigella dysenteriae serotype 1 (strain Sd197) protein is 2,3-bisphosphoglycerate-independent phosphoglycerate mutase.